The chain runs to 211 residues: RNA chaperone ProQ (211 aa).

A disordered region spans residues 112-148 (ERRAVEKANNPKANKKRSVHHSGNKSENKKSAGKKFS). The span at 124 to 134 (ANKKRSVHHSG) shows a compositional bias: basic residues.

Belongs to the ProQ family.

The protein localises to the cytoplasm. RNA chaperone with significant RNA binding, RNA strand exchange and RNA duplexing activities. In Histophilus somni (strain 2336) (Haemophilus somnus), this protein is RNA chaperone ProQ.